The following is a 388-amino-acid chain: P2X purinoceptor 4 (388 aa).

At Met-1–Arg-33 the chain is on the cytoplasmic side. A helical membrane pass occupies residues Val-34–Tyr-54. The Extracellular segment spans residues Gln-55 to Asn-338. Residues Lys-67 and Lys-69 each coordinate ATP. 2 residues coordinate CTP: Lys-67 and Lys-69. Asn-75, Asn-110, Asn-131, Asn-153, and Asn-184 each carry an N-linked (GlcNAc...) asparagine glycan. 3 cysteine pairs are disulfide-bonded: Cys-116-Cys-165, Cys-126-Cys-149, and Cys-132-Cys-159. Thr-186 and Leu-188 together coordinate ATP. Thr-186 provides a ligand contact to CTP. Residues Asn-199 and Asn-208 are each glycosylated (N-linked (GlcNAc...) asparagine). Cystine bridges form between Cys-217-Cys-227 and Cys-261-Cys-270. ATP contacts are provided by Asn-293, Arg-295, and Lys-313. CTP is bound by residues Asn-293, Arg-295, and Lys-313. Residues Val-339–Tyr-359 traverse the membrane as a helical segment. The Cytoplasmic segment spans residues Cys-360–Gln-388.

This sequence belongs to the P2X receptor family. As to quaternary structure, functional P2RXs are organized as homomeric and heteromeric trimers. Functional P2XRs are organized as homomeric and heteromeric trimers. Forms heterotrimer with P2RX1. Interacts with P2RX7 (via C-terminus); this interaction is functional only in the presence of ATP. Forms heterotrimer with P2RX4; functional differences between homomeric P2RX4 and P2RX4/6 heterotrimer are minor. Interacts with AP1M2.

It is found in the cell membrane. The protein localises to the lysosome membrane. It carries out the reaction K(+)(in) = K(+)(out). The catalysed reaction is Na(+)(in) = Na(+)(out). It catalyses the reaction Ca(2+)(in) = Ca(2+)(out). Its activity is regulated as follows. Activated by ATP. pH-dependent and inhibited by acidic pH. Its function is as follows. ATP-gated nonselective transmembrane cation channel permeable to potassium, sodium and calcium. CTP, but not GTP or UTP, functions as a weak affinity agonist for P2RX4. Activated by extracellularly released ATP, it plays multiple role in immunity and central nervous system physiology. Plays a key role in initial steps of T-cell activation and Ca(2+) microdomain formation. Also participates in basal T-cell activity without TCR/CD3 stimulation. Promotes the differentiation and activation of Th17 cells via expression of retinoic acid-related orphan receptor C/RORC. Upon activation, drives microglia motility via the PI3K/Akt pathway. Could also function as an ATP-gated cation channel of lysosomal membranes. The sequence is that of P2X purinoceptor 4 (P2rx4) from Mus musculus (Mouse).